A 431-amino-acid polypeptide reads, in one-letter code: Na(+)-translocating NADH-quinone reductase subunit F (431 aa).

Residues 10–30 form a helical membrane-spanning segment; sequence IFVASAAFCSLGLILVAVILL. A 2Fe-2S ferredoxin-type domain is found at 41-133; sequence CKLKINNDDS…DLCLEVEERY (93 aa). [2Fe-2S] cluster is bound by residues C76, C82, C85, and C117. Residues 136–286 enclose the FAD-binding FR-type domain; sequence ASSWEGTVVS…SGPYGESFMK (151 aa).

This sequence belongs to the NqrF family. As to quaternary structure, composed of six subunits; NqrA, NqrB, NqrC, NqrD, NqrE and NqrF. The cofactor is [2Fe-2S] cluster. FAD is required as a cofactor.

It is found in the cell inner membrane. It carries out the reaction a ubiquinone + n Na(+)(in) + NADH + H(+) = a ubiquinol + n Na(+)(out) + NAD(+). In terms of biological role, NQR complex catalyzes the reduction of ubiquinone-1 to ubiquinol by two successive reactions, coupled with the transport of Na(+) ions from the cytoplasm to the periplasm. The first step is catalyzed by NqrF, which accepts electrons from NADH and reduces ubiquinone-1 to ubisemiquinone by a one-electron transfer pathway. This Chlamydia trachomatis serovar A (strain ATCC VR-571B / DSM 19440 / HAR-13) protein is Na(+)-translocating NADH-quinone reductase subunit F.